We begin with the raw amino-acid sequence, 143 residues long: Large ribosomal subunit protein uL11 (143 aa).

It belongs to the universal ribosomal protein uL11 family. Part of the ribosomal stalk of the 50S ribosomal subunit. Interacts with L10 and the large rRNA to form the base of the stalk. L10 forms an elongated spine to which L12 dimers bind in a sequential fashion forming a multimeric L10(L12)X complex. Post-translationally, one or more lysine residues are methylated.

Its function is as follows. Forms part of the ribosomal stalk which helps the ribosome interact with GTP-bound translation factors. This Burkholderia ambifaria (strain MC40-6) protein is Large ribosomal subunit protein uL11.